The chain runs to 75 residues: uncharacterized protein (75 aa).

This is an uncharacterized protein from Vaccinia virus (strain Copenhagen) (VACV).